We begin with the raw amino-acid sequence, 942 residues long: DNA mismatch repair protein MSH2 (942 aa).

667 to 674 (GPNMGGKS) contributes to the ATP binding site.

The protein belongs to the DNA mismatch repair MutS family. Heterodimer of MSH2 and MSH6 (GTBP).

Its subcellular location is the nucleus. In terms of biological role, involved in postreplication mismatch repair. Binds specifically to DNA containing mismatched nucleotides thus providing a target for the excision repair processes characteristic of postreplication mismatch repair. The protein is DNA mismatch repair protein MSH2 (MUS1) of Zea mays (Maize).